The sequence spans 682 residues: Polyadenylate-binding protein 5 (682 aa).

4 RRM domains span residues 59–136 (SSLY…LSNR), 146–223 (GNVF…HFVR), 239–316 (TNVY…RAQK), and 342–419 (SNLY…LAQR). A PABC domain is found at 588-665 (TISKLASDLA…ALDVLRRSAD (78 aa)). A Phosphoserine modification is found at Ser-600.

Belongs to the polyadenylate-binding protein type-1 family. As to expression, expressed predominantly in immature flowers but also at lower levels in mature flowers and siliques. Detected in tapetum, pollen, ovules and developing seeds. Also detected in primary inflorescences and immature siliques.

It is found in the cytoplasm. Its subcellular location is the nucleus. Functionally, binds the poly(A) tail of mRNA. Appears to be an important mediator of the multiple roles of the poly(A) tail in mRNA biogenesis, stability and translation. This chain is Polyadenylate-binding protein 5 (PAB5), found in Arabidopsis thaliana (Mouse-ear cress).